The chain runs to 97 residues: Mapk-regulated corepressor-interacting protein 1 (97 aa).

A disordered region spans residues 1–30; sequence MTSSPVSRVVYNGKRNSSHRSPPNSSEIFT. Residue S21 is modified to Phosphoserine. T30 bears the Phosphothreonine mark. Y41 carries the post-translational modification Phosphotyrosine. The disordered stretch occupies residues 77 to 97; sequence TFRPIDLSDLKRRNTQDAKKS. The short motif at 80-84 is the PXDLS motif element; the sequence is PIDLS. Basic and acidic residues predominate over residues 82–97; the sequence is DLSDLKRRNTQDAKKS.

It belongs to the MCRIP family. Interacts (unphosphorylated form, via the PXDLS motif) with CTBP1, competitively inhibiting CTBP-ZEB1 interaction. Interacts with CTBP2. Interacts with MCRIP2. Interacts with DDX6. Post-translationally, phosphorylation by MAPK3/1 (ERK1/2) regulates MCRIP1 binding to CTBP(s).

Its subcellular location is the nucleus. It is found in the cytoplasm. It localises to the stress granule. Its function is as follows. The phosphorylation status of MCRIP1 functions as a molecular switch to regulate epithelial-mesenchymal transition. Unphosphorylated MCRIP1 binds to and inhibits the transcriptional corepressor CTBP(s). When phosphorylated by MAPK/ERK, MCRIP1 releases CTBP(s) resulting in transcriptional silencing of the E-cadherin gene and induction of epithelial-mesenchymal transition. This chain is Mapk-regulated corepressor-interacting protein 1 (MCRIP1), found in Bos taurus (Bovine).